The primary structure comprises 65 residues: Large ribosomal subunit protein bL35 (65 aa).

The interval 1–23 (MPKMKTHRGAAKRFKKTGTGKLK) is disordered.

It belongs to the bacterial ribosomal protein bL35 family.

In Clostridium perfringens (strain ATCC 13124 / DSM 756 / JCM 1290 / NCIMB 6125 / NCTC 8237 / Type A), this protein is Large ribosomal subunit protein bL35.